Consider the following 99-residue polypeptide: Cytochrome c oxidase subunit 4 isoform 1, mitochondrial (99 aa).

Over 1 to 73 the chain is Mitochondrial matrix; sequence SVVKREDFSL…TFAEMNRGSN (73 aa). K4 is subject to N6-acetyllysine; alternate. At K4 the chain carries N6-succinyllysine; alternate. Residue K28 is modified to N6-acetyllysine. Phosphoserine occurs at positions 31 and 33. K35 bears the N6-acetyllysine; alternate mark. K35 carries the N6-succinyllysine; alternate modification. K42 carries the post-translational modification N6-acetyllysine. The helical transmembrane segment at 74 to 99 threads the bilayer; the sequence is EWKTVVGTATFFIGFTALIIMWQKRY.

This sequence belongs to the cytochrome c oxidase IV family. As to quaternary structure, component of the cytochrome c oxidase (complex IV, CIV), a multisubunit enzyme composed of 14 subunits. The complex is composed of a catalytic core of 3 subunits MT-CO1, MT-CO2 and MT-CO3, encoded in the mitochondrial DNA, and 11 supernumerary subunits COX4I, COX5A, COX5B, COX6A, COX6B, COX6C, COX7A, COX7B, COX7C, COX8 and NDUFA4, which are encoded in the nuclear genome. The complex exists as a monomer or a dimer and forms supercomplexes (SCs) in the inner mitochondrial membrane with NADH-ubiquinone oxidoreductase (complex I, CI) and ubiquinol-cytochrome c oxidoreductase (cytochrome b-c1 complex, complex III, CIII), resulting in different assemblies (supercomplex SCI(1)III(2)IV(1) and megacomplex MCI(2)III(2)IV(2)). Interacts with PHB2; the interaction decreases in absence of SPHK2. Interacts with AFG1L. Interacts with ABCB7; this interaction allows the regulation of cellular iron homeostasis and cellular reactive oxygen species (ROS) levels in cardiomyocytes. Interacts with FLVCR2; this interaction occurs in the absence of heme and is disrupted upon heme binding. Interacts with IRGC.

The protein resides in the mitochondrion inner membrane. It functions in the pathway energy metabolism; oxidative phosphorylation. Functionally, component of the cytochrome c oxidase, the last enzyme in the mitochondrial electron transport chain which drives oxidative phosphorylation. The respiratory chain contains 3 multisubunit complexes succinate dehydrogenase (complex II, CII), ubiquinol-cytochrome c oxidoreductase (cytochrome b-c1 complex, complex III, CIII) and cytochrome c oxidase (complex IV, CIV), that cooperate to transfer electrons derived from NADH and succinate to molecular oxygen, creating an electrochemical gradient over the inner membrane that drives transmembrane transport and the ATP synthase. Cytochrome c oxidase is the component of the respiratory chain that catalyzes the reduction of oxygen to water. Electrons originating from reduced cytochrome c in the intermembrane space (IMS) are transferred via the dinuclear copper A center (CU(A)) of subunit 2 and heme A of subunit 1 to the active site in subunit 1, a binuclear center (BNC) formed by heme A3 and copper B (CU(B)). The BNC reduces molecular oxygen to 2 water molecules using 4 electrons from cytochrome c in the IMS and 4 protons from the mitochondrial matrix. This is Cytochrome c oxidase subunit 4 isoform 1, mitochondrial (COX4I1) from Trachypithecus cristatus (Silvered leaf-monkey).